The sequence spans 95 residues: MAVKERVGTVVSDKMEKTVVVAVETRFPHPIYQKTVSRTTRYKAHDEDNSCRVGDRVRITETRPMSRQKRWAIAEVLSHSPKAAAAEAKAEEANQ.

It belongs to the universal ribosomal protein uS17 family. Part of the 30S ribosomal subunit.

One of the primary rRNA binding proteins, it binds specifically to the 5'-end of 16S ribosomal RNA. This Synechococcus sp. (strain CC9902) protein is Small ribosomal subunit protein uS17.